The primary structure comprises 317 residues: tRNA pseudouridine synthase B (317 aa).

The active-site Nucleophile is D47.

The protein belongs to the pseudouridine synthase TruB family. Type 1 subfamily.

The catalysed reaction is uridine(55) in tRNA = pseudouridine(55) in tRNA. Functionally, responsible for synthesis of pseudouridine from uracil-55 in the psi GC loop of transfer RNAs. This is tRNA pseudouridine synthase B from Shewanella frigidimarina (strain NCIMB 400).